We begin with the raw amino-acid sequence, 55 residues long: Protein CADMIUM TOLERANCE 1 (55 aa).

The helical transmembrane segment at 24-40 (GCLYACIFTALCCFCCY) threads the bilayer.

It belongs to the CYSTM1 family.

Its subcellular location is the cell membrane. The protein resides in the secreted. It is found in the cell wall. Functionally, confers resistance to heavy metal ions (e.g. cadmium (CdCl(2)) and copper (CuCl(2))) by chelating them at the plasma membrane of root cells, thus stopping their entry and reducing their accumulation. Binds to aluminium (Al). The protein is Protein CADMIUM TOLERANCE 1 of Oryza sativa subsp. indica (Rice).